A 1146-amino-acid polypeptide reads, in one-letter code: Error-prone DNA polymerase (1146 aa).

2 disordered regions span residues 1–43 (MGWG…WSRK) and 154–178 (ATPEFEHAAAPDSAPRTGEPDPPGP). The span at 12 to 26 (ELERVLSGRPGRTDP) shows a compositional bias: basic and acidic residues.

This sequence belongs to the DNA polymerase type-C family. DnaE2 subfamily.

It is found in the cytoplasm. The catalysed reaction is DNA(n) + a 2'-deoxyribonucleoside 5'-triphosphate = DNA(n+1) + diphosphate. DNA polymerase involved in damage-induced mutagenesis and translesion synthesis (TLS). It is not the major replicative DNA polymerase. The protein is Error-prone DNA polymerase of Nocardia farcinica (strain IFM 10152).